The chain runs to 878 residues: DNA mismatch repair protein MutS (878 aa).

626-633 (GPNMAGKS) is an ATP binding site.

Belongs to the DNA mismatch repair MutS family.

Its function is as follows. This protein is involved in the repair of mismatches in DNA. It is possible that it carries out the mismatch recognition step. This protein has a weak ATPase activity. The chain is DNA mismatch repair protein MutS from Paracoccus denitrificans (strain Pd 1222).